The sequence spans 293 residues: 4-diphosphocytidyl-2-C-methyl-D-erythritol kinase (293 aa).

Residue K16 is part of the active site. 99-109 (PMGAGLGGGSS) contacts ATP. Residue D141 is part of the active site.

The protein belongs to the GHMP kinase family. IspE subfamily.

The enzyme catalyses 4-CDP-2-C-methyl-D-erythritol + ATP = 4-CDP-2-C-methyl-D-erythritol 2-phosphate + ADP + H(+). It participates in isoprenoid biosynthesis; isopentenyl diphosphate biosynthesis via DXP pathway; isopentenyl diphosphate from 1-deoxy-D-xylulose 5-phosphate: step 3/6. In terms of biological role, catalyzes the phosphorylation of the position 2 hydroxy group of 4-diphosphocytidyl-2C-methyl-D-erythritol. The sequence is that of 4-diphosphocytidyl-2-C-methyl-D-erythritol kinase from Paraburkholderia xenovorans (strain LB400).